Consider the following 2327-residue polypeptide: Nonribosomal peptide synthetase apmB (2327 aa).

The segment at 214 to 605 is adenylation 1; that stretch reads DTQAKSRPDS…GRKDMQIKLR (392 aa). The Carrier 1 domain maps to 734-810; the sequence is EPATATGKVL…EMADACTKVI (77 aa). An O-(pantetheine 4'-phosphoryl)serine modification is found at Ser-771. Residues 845 to 1259 form a condensation 1 region; sequence EDLYPCTAMQ…IFISSKDQES (415 aa). The adenylation 2 stretch occupies residues 1281-1675; it reads ERIAERPDHE…RRKDTQVKLR (395 aa). In terms of domain architecture, Carrier 2 spans 1816-1892; that stretch reads PPTTDMQITM…AISAVAETLS (77 aa). Ser-1853 is modified (O-(pantetheine 4'-phosphoryl)serine). Positions 1937–2260 are condensation 2; sequence TDFQSLAING…VFQYQDFGGE (324 aa). A disordered region spans residues 2299-2327; the sequence is RVDLPRRPSPAGDTRDGPTAASDSPSRAR.

The protein belongs to the NRP synthetase family.

It catalyses the reaction N-benzoyl-L-phenylalaninol + benzoate + L-phenylalanine + 2 ATP = asperphenamate + 2 AMP + 2 diphosphate + H(+). Its pathway is secondary metabolite biosynthesis. Its function is as follows. Nonribosomal peptide synthetase; part of the gene cluster that mediates the biosynthesis of asperphenamate, a rare linear amino acid ester that exhibits antitumor activity towards a number of cell lines. The structure of asperphenamate contains two subunits, N-benzoylphenylalanine and N-benzoylphenylalaninol, which are connected by an inter-molecular ester bond. The first step of asperphenamate biosynthesis is the generation of N-benzoylphenylalaninol by the nonribosomal peptide synthase apmA. Using phenylalanine and benzoic acid as substrates, apmA catalyzes amide bond formation and tethers the intermediate into the NRPS chain. Then, the terminal R domain of apmA catalyzes the reduction reaction to get the shunt product N-benzoylphenylalaninol. Subsequently, the nonribosomal peptide synthase apmB activates the same substrates as does apmA (phenylalanine and benzoic acid) to produce N-benzoylphenylalanine before condensing N-benzoylphenylalanine and N-benzoylphenylalaninol to release asperphenamate. The sequence is that of Nonribosomal peptide synthetase apmB from Penicillium brevicompactum.